We begin with the raw amino-acid sequence, 763 residues long: Phosphoglycerol transferase I (763 aa).

4 helical membrane passes run 1–21 (MSEL…AWKA), 26–46 (WWFA…ITLF), 77–97 (ILPG…LGWI), and 108–128 (FGYS…SPAF).

This sequence belongs to the OpgB family.

The protein localises to the cell inner membrane. The enzyme catalyses a phosphatidylglycerol + a membrane-derived-oligosaccharide D-glucose = a 1,2-diacyl-sn-glycerol + a membrane-derived-oligosaccharide 6-(glycerophospho)-D-glucose.. Its pathway is glycan metabolism; osmoregulated periplasmic glucan (OPG) biosynthesis. In terms of biological role, transfers a phosphoglycerol residue from phosphatidylglycerol to the membrane-bound nascent glucan backbones. In Escherichia coli (strain ATCC 8739 / DSM 1576 / NBRC 3972 / NCIMB 8545 / WDCM 00012 / Crooks), this protein is Phosphoglycerol transferase I.